We begin with the raw amino-acid sequence, 443 residues long: RILP-like protein homolog (443 aa).

The 89-residue stretch at 8 to 96 (EMGEMVLDAI…ESEKLEKAEF (89 aa)) folds into the RH1 domain. Residues 59 to 315 (LELLEALATK…TLNEQLAELK (257 aa)) are a coiled coil. One can recognise an RH2 domain in the interval 282-401 (RPRYTTRELK…KSSESGIRKF (120 aa)). Residues 311–394 (LAELKPPSQA…PDDAPWKKSS (84 aa)) form a disordered region. Residues 332–355 (DDSDEDDDGHVADNDDDDDEEEAA) are compositionally biased toward acidic residues. Residues 356-368 (AEANELEPPAAGE) show a composition bias toward low complexity.

This sequence belongs to the RILPL family. Interacts with Arl8 (in GTP-bound form).

It localises to the lysosome membrane. Functionally, may have a role in lysosome distribution by interacting with Arl8. The sequence is that of RILP-like protein homolog from Drosophila melanogaster (Fruit fly).